We begin with the raw amino-acid sequence, 402 residues long: Arginine biosynthesis bifunctional protein ArgJ (402 aa).

Residues Thr152, Lys178, Thr189, Glu275, Asn397, and Thr402 each contribute to the substrate site. Catalysis depends on Thr189, which acts as the Nucleophile.

Belongs to the ArgJ family. As to quaternary structure, heterotetramer of two alpha and two beta chains.

The protein resides in the cytoplasm. The catalysed reaction is N(2)-acetyl-L-ornithine + L-glutamate = N-acetyl-L-glutamate + L-ornithine. The enzyme catalyses L-glutamate + acetyl-CoA = N-acetyl-L-glutamate + CoA + H(+). Its pathway is amino-acid biosynthesis; L-arginine biosynthesis; L-ornithine and N-acetyl-L-glutamate from L-glutamate and N(2)-acetyl-L-ornithine (cyclic): step 1/1. The protein operates within amino-acid biosynthesis; L-arginine biosynthesis; N(2)-acetyl-L-ornithine from L-glutamate: step 1/4. Functionally, catalyzes two activities which are involved in the cyclic version of arginine biosynthesis: the synthesis of N-acetylglutamate from glutamate and acetyl-CoA as the acetyl donor, and of ornithine by transacetylation between N(2)-acetylornithine and glutamate. In Lactiplantibacillus plantarum (strain ATCC BAA-793 / NCIMB 8826 / WCFS1) (Lactobacillus plantarum), this protein is Arginine biosynthesis bifunctional protein ArgJ.